The chain runs to 397 residues: Probable peptidoglycan glycosyltransferase FtsW (397 aa).

The Cytoplasmic portion of the chain corresponds to 1–18; the sequence is MSALTLTASKNTQTMTLD. A helical transmembrane segment spans residues 19 to 39; sequence LPLLGSALALAAIGLIMVTSA. Topologically, residues 40–58 are periplasmic; that stretch reads SVDFADDANGQALYYMWRH. A helical membrane pass occupies residues 59–79; the sequence is LTYLLAGVAVGFVILRLPLEW. Residues 80 to 83 are Cytoplasmic-facing; that stretch reads WHKQ. Residues 84 to 104 form a helical membrane-spanning segment; it reads SWLLLVVALGFLVAVLIPGIG. At 105-112 the chain is on the periplasmic side; the sequence is RTVNGSTR. A helical transmembrane segment spans residues 113–133; it reads WISLGVINIQASEIAKVCLAI. The Cytoplasmic segment spans residues 134 to 148; it reads YTASYLVRRLDEVRG. Residues 149-169 traverse the membrane as a helical segment; it reads SWWGFAKPLLVLMLVALLLLM. The Periplasmic portion of the chain corresponds to 170-172; the sequence is EPD. The chain crosses the membrane as a helical span at residues 173–193; that stretch reads FGALVVTMCAVVGMIFLSGVA. The Cytoplasmic portion of the chain corresponds to 194–196; that stretch reads LSR. Residues 197–217 form a helical membrane-spanning segment; the sequence is FAALLMFCVGSVALLAVSQPY. Residues 218–272 are Periplasmic-facing; sequence RLKRLTAYTDPWADQFDSGYQLTQALIAFGRGEWSGVGLGNSVQKLFYLPEAHTD. The chain crosses the membrane as a helical span at residues 273–293; it reads FVFAIIAEELGLLGSLLIIVL. The Cytoplasmic segment spans residues 294–316; the sequence is FGVLLWRGMYVSRVAERAGQLFN. A helical transmembrane segment spans residues 317-337; sequence AYAGYGVTLLLGGQALINLGV. Topologically, residues 338 to 348 are periplasmic; the sequence is NTGLLPTKGLT. A helical membrane pass occupies residues 349–369; sequence LPLISYGGSSLIISCLCVAIL. At 370–397 the chain is on the cytoplasmic side; that stretch reads LRIGSEAVSGEQTEDESPKVKNRGGAQR.

Belongs to the SEDS family. FtsW subfamily.

It is found in the cell inner membrane. The enzyme catalyses [GlcNAc-(1-&gt;4)-Mur2Ac(oyl-L-Ala-gamma-D-Glu-L-Lys-D-Ala-D-Ala)](n)-di-trans,octa-cis-undecaprenyl diphosphate + beta-D-GlcNAc-(1-&gt;4)-Mur2Ac(oyl-L-Ala-gamma-D-Glu-L-Lys-D-Ala-D-Ala)-di-trans,octa-cis-undecaprenyl diphosphate = [GlcNAc-(1-&gt;4)-Mur2Ac(oyl-L-Ala-gamma-D-Glu-L-Lys-D-Ala-D-Ala)](n+1)-di-trans,octa-cis-undecaprenyl diphosphate + di-trans,octa-cis-undecaprenyl diphosphate + H(+). The protein operates within cell wall biogenesis; peptidoglycan biosynthesis. Its function is as follows. Peptidoglycan polymerase that is essential for cell division. This is Probable peptidoglycan glycosyltransferase FtsW from Hahella chejuensis (strain KCTC 2396).